Consider the following 883-residue polypeptide: Mitogen-activated protein kinase kinase kinase YODA (883 aa).

3 disordered regions span residues 28 to 193 (GFAS…AEMF), 303 to 364 (CSPE…PPLL), and 376 to 396 (SAAT…TVSP). Positions 57–72 (SRLPSRSPSPSTRVSR) are enriched in low complexity. Polar residues predominate over residues 94–105 (VTSTDSGMNGSQ). A compositionally biased stretch (low complexity) spans 143-165 (SVSSGSSVGDIPSDSLLSPLASD). 2 stretches are compositionally biased toward polar residues: residues 167–189 (ENGN…NKNS) and 314–328 (RMTS…QSGA). Residues 400–656 (WKKGRLLGMG…AAQLLDHAFV (257 aa)) form the Protein kinase domain. ATP is bound by residues 406–414 (LGMGSFGHV) and Lys429. Asp525 serves as the catalytic Proton acceptor. Disordered regions lie at residues 712-773 (GSGF…GAIP) and 787-838 (EGIG…IQPG). The span at 733-756 (SPIFHSHSPHISGRRSPSPISSPH) shows a compositional bias: low complexity.

Belongs to the protein kinase superfamily. STE Ser/Thr protein kinase family. MAP kinase kinase kinase subfamily. Interacts with ASK7. Interacts with BSK12/SSP. Binds to BASL and MPK6. Expressed in roots, leaves, guard cells, stems, flowers and siliques.

The protein localises to the cytoplasm. It is found in the cell cortex. The protein resides in the cell membrane. The catalysed reaction is L-seryl-[protein] + ATP = O-phospho-L-seryl-[protein] + ADP + H(+). It carries out the reaction L-threonyl-[protein] + ATP = O-phospho-L-threonyl-[protein] + ADP + H(+). With respect to regulation, contains an N-terminal autoinhibitory domain. Functions in a MAP kinase cascade that acts as a molecular switch to regulate the first cell fate decisions in the zygote and the early embryo. Promotes elongation of the zygote and development of its basal daughter cell into the extra-embryonic suspensor. In stomatal development, acts downstream of the LRR receptor TMM, but upstream of the MKK4/MKK5-MPK3/MPK6 module to regulate stomatal cell fate before the guard mother cell (GMC) is specified. Plays a central role in both guard cell identity and pattern formation. This MAPK cascade also functions downstream of the ER receptor in regulating coordinated local cell proliferation, which shapes the morphology of plant organs. Upon brassinosteroid signaling, is inhibited by phosphorylation of its auto-inhibitory N-terminal domain by the GSK3-like kinase ASK7. The polypeptide is Mitogen-activated protein kinase kinase kinase YODA (Arabidopsis thaliana (Mouse-ear cress)).